Here is a 162-residue protein sequence, read N- to C-terminus: MQHLVLIGFMGSGKSSLAQELGLALKLEVLDTDMIISERVGLSVREIFEELGEDNFRMFEKNLIDELKTLKTPHVISTGGGIVMHDNLKGLGTTFYLKIDFETLIKRLNQKEREKRPLLNNLTQAKELFEKRQALYEKNASFIIDARGGLNNSLKQVLQFIA.

11–16 serves as a coordination point for ATP; sequence GSGKSS. Residue Ser-15 coordinates Mg(2+). Residues Asp-33, Arg-57, and Gly-80 each contribute to the substrate site. An ATP-binding site is contributed by Arg-116. A substrate-binding site is contributed by Arg-132.

This sequence belongs to the shikimate kinase family. Monomer. The cofactor is Mg(2+).

It localises to the cytoplasm. The catalysed reaction is shikimate + ATP = 3-phosphoshikimate + ADP + H(+). It participates in metabolic intermediate biosynthesis; chorismate biosynthesis; chorismate from D-erythrose 4-phosphate and phosphoenolpyruvate: step 5/7. Its function is as follows. Catalyzes the specific phosphorylation of the 3-hydroxyl group of shikimic acid using ATP as a cosubstrate. This chain is Shikimate kinase, found in Helicobacter pylori (strain G27).